The following is a 136-amino-acid chain: Large ribosomal subunit protein uL16 (136 aa).

The protein belongs to the universal ribosomal protein uL16 family. In terms of assembly, part of the 50S ribosomal subunit.

Its function is as follows. Binds 23S rRNA and is also seen to make contacts with the A and possibly P site tRNAs. This is Large ribosomal subunit protein uL16 from Rickettsia canadensis (strain McKiel).